The sequence spans 225 residues: Uracil-DNA glycosylase (225 aa).

Catalysis depends on aspartate 65, which acts as the Proton acceptor.

This sequence belongs to the uracil-DNA glycosylase (UDG) superfamily. UNG family.

It localises to the cytoplasm. It carries out the reaction Hydrolyzes single-stranded DNA or mismatched double-stranded DNA and polynucleotides, releasing free uracil.. Its function is as follows. Excises uracil residues from the DNA which can arise as a result of misincorporation of dUMP residues by DNA polymerase or due to deamination of cytosine. The protein is Uracil-DNA glycosylase of Bacillus mycoides (strain KBAB4) (Bacillus weihenstephanensis).